Reading from the N-terminus, the 459-residue chain is Zinc finger and BTB domain-containing protein 9 (459 aa).

Residues 48 to 112 enclose the BTB domain; it reads CDVSLLVQGR…IYSGSLHLPL (65 aa). The segment covering 178 to 189 has biased composition (polar residues); the sequence is VRSSASTENSVL. Disordered regions lie at residues 178 to 200 and 212 to 274; these read VRSS…EGSE and EEEE…ASQI. Glycyl lysine isopeptide (Lys-Gly) (interchain with G-Cter in SUMO2) cross-links involve residues Lys285, Lys293, and Lys368. The interval 293–356 is disordered; the sequence is KEKTKVLSGE…GGTGQAMHGP (64 aa). Residues 397 to 419 form a C2H2-type 1 zinc finger; that stretch reads FGCGICNKRFKLKHHLTEHMKTH. The C2H2-type 2; atypical zinc finger occupies 424-446; the sequence is HACPHCGRRFRVQAFFLRHRDLC.

Its subcellular location is the nucleus. Functionally, may be involved in transcriptional regulation. The polypeptide is Zinc finger and BTB domain-containing protein 9 (Zbtb9) (Mus musculus (Mouse)).